Here is a 639-residue protein sequence, read N- to C-terminus: ATP-dependent zinc metalloprotease FtsH (639 aa).

The Cytoplasmic segment spans residues 1–4 (MNST). The helical transmembrane segment at 5–25 (VKTIVFWVFILACCILLWQVF) threads the bilayer. Residues 26–104 (QRSSNTGKEQ…TVKDNSGSPW (79 aa)) lie on the Periplasmic side of the membrane. A helical transmembrane segment spans residues 105 to 125 (WSILIQFSPVLVLVALWFFMI). The Cytoplasmic portion of the chain corresponds to 126 to 639 (RQMQSGGNKA…GLPEGSPSPA (514 aa)). 196 to 203 (GPPGTGKT) contributes to the ATP binding site. His418 contacts Zn(2+). Glu419 is an active-site residue. 2 residues coordinate Zn(2+): His422 and Asp494. Residues 597 to 639 (KDLPPLKPSGGSGTATTDDVQQVLKPSSDRGAGGLPEGSPSPA) are disordered.

This sequence in the central section; belongs to the AAA ATPase family. The protein in the C-terminal section; belongs to the peptidase M41 family. Homohexamer. The cofactor is Zn(2+).

It localises to the cell inner membrane. Acts as a processive, ATP-dependent zinc metallopeptidase for both cytoplasmic and membrane proteins. Plays a role in the quality control of integral membrane proteins. The polypeptide is ATP-dependent zinc metalloprotease FtsH (Acidobacterium capsulatum (strain ATCC 51196 / DSM 11244 / BCRC 80197 / JCM 7670 / NBRC 15755 / NCIMB 13165 / 161)).